The primary structure comprises 243 residues: Carboxy-S-adenosyl-L-methionine synthase (243 aa).

S-adenosyl-L-methionine is bound by residues Tyr-35, 68–70 (GCS), 92–93 (DN), and Arg-199.

It belongs to the class I-like SAM-binding methyltransferase superfamily. Cx-SAM synthase family. In terms of assembly, homodimer.

The catalysed reaction is prephenate + S-adenosyl-L-methionine = carboxy-S-adenosyl-L-methionine + 3-phenylpyruvate + H2O. Catalyzes the conversion of S-adenosyl-L-methionine (SAM) to carboxy-S-adenosyl-L-methionine (Cx-SAM). The sequence is that of Carboxy-S-adenosyl-L-methionine synthase from Helicobacter pylori (strain ATCC 700392 / 26695) (Campylobacter pylori).